Consider the following 1467-residue polypeptide: Helicase ARIP4 (1467 aa).

Disordered regions lie at residues 1 to 150 (MSDE…YAAP) and 186 to 234 (DSSS…GGTH). The span at 11–49 (PDLDPDVELEDAEEEEEEEEVAVEECDRDDEEDLLDDPS) shows a compositional bias: acidic residues. Residues 72-82 (TSTTSSQSEPS) show a composition bias toward low complexity. Over residues 100 to 115 (KKRAQKPSHMRRNIRK) the composition is skewed to basic residues. Glycyl lysine isopeptide (Lys-Gly) (interchain with G-Cter in SUMO2) cross-links involve residues K115 and K127. Composition is skewed to basic and acidic residues over residues 133 to 147 (ELER…RKDY) and 192 to 201 (EDEKSSRDEV). Residue K272 forms a Glycyl lysine isopeptide (Lys-Gly) (interchain with G-Cter in SUMO2) linkage. The Helicase ATP-binding domain maps to 292–512 (RFKTSSGFGC…WCMVDFVRPD (221 aa)). 305-312 (HSMGLGKT) lines the ATP pocket. A DEAH box motif is present at residues 463-466 (DEGH). An LXXLL motif 1 motif is present at residues 551–555 (LHSLL). The disordered stretch occupies residues 649 to 673 (GSAGTSARCPPQGTKGKGEDSTLAS). Glycyl lysine isopeptide (Lys-Gly) (interchain with G-Cter in SUMO2) cross-links involve residues K665, K682, K759, K901, K1014, and K1018. The Helicase C-terminal domain maps to 728–896 (HLIEESVKLG…RVVDDLNPML (169 aa)). The segment at 1120–1171 (RATGKPKVPEDGRMAASGSQGPSCESTSNGRHSASSPKAPDPEGLARPVSPD) is disordered. The span at 1136 to 1155 (SGSQGPSCESTSNGRHSASS) shows a compositional bias: polar residues. Phosphoserine is present on residues S1169 and S1172. 2 disordered regions span residues 1184–1221 (DVAA…TALG) and 1247–1284 (PVLD…VQPY). Position 1260 is a phosphothreonine (T1260). An LXXLL motif 2 motif is present at residues 1329-1333 (LSNLL). The tract at residues 1445 to 1467 (AEVGFSSNDDEDKDDDVIEVTGK) is disordered. Positions 1452-1467 (NDDEDKDDDVIEVTGK) are enriched in acidic residues.

This sequence belongs to the SNF2/RAD54 helicase family. Interacts with AR via its N-terminus. Interacts with DYRK1A. Binds DNA and mononucleosomes, but does not seem to form large multiprotein complexes. Post-translationally, sumoylated.

Its subcellular location is the nucleus. It carries out the reaction ATP + H2O = ADP + phosphate + H(+). Enzyme activity is enhanced by dsDNA (double-stranded DNA) and ssDNA (single-stranded DNA). DNA helicase that modulates androgen receptor (AR)-dependent transactivation in a promoter-dependent manner. Not able to remodel mononucleosomes in vitro. In Homo sapiens (Human), this protein is Helicase ARIP4 (RAD54L2).